The primary structure comprises 264 residues: uncharacterized protein (264 aa).

The tract at residues 235–264 (ESSDEEDNDDDIINNDTNNDINNDDIEIKT) is disordered. A compositionally biased stretch (acidic residues) spans 237 to 247 (SDEEDNDDDII).

This is an uncharacterized protein from Acanthamoeba polyphaga mimivirus (APMV).